A 75-amino-acid polypeptide reads, in one-letter code: MARGFGRKKFCRFTVEGVKEIDYKDLDTLKSYITETGKIVPSRITGTSAKYQRQLSTAIKRARYLALLPYTDQHK.

Belongs to the bacterial ribosomal protein bS18 family. As to quaternary structure, part of the 30S ribosomal subunit. Forms a tight heterodimer with protein bS6.

In terms of biological role, binds as a heterodimer with protein bS6 to the central domain of the 16S rRNA, where it helps stabilize the platform of the 30S subunit. The sequence is that of Small ribosomal subunit protein bS18 from Hydrogenovibrio crunogenus (strain DSM 25203 / XCL-2) (Thiomicrospira crunogena).